The sequence spans 542 residues: MFSLQELCRKNIYILPYPLGKHVLQQLGLYWKGHGSLQRIGDDHVLLQQDLIFSINEALRMAAEEGNNEVVKLLLLWEGNLHYAIIGALEGDRYDLIHKYYEQIGDCHKILPLIQDPQIFEKCHELSNSCNIRCLLEHAVKHNMLSILQKHKDQIRLHMALTQILFELACHERKNDIIRWIGYSLHIYHLETIFDVAFAHKNLSLYVLGYELLMHKVNTEAANIDLPNLLSYHLRTAAAGGLLNFMLETIKHGGCVDKTVLSAAIRYKHRKIVAHFIHQVPRKTVKKLLLYAVQARAPKKTLNLLLSSLNYAVHTITKQLVHNVINYSSTLVVKLLLMRRKRKLNLVDAVLARLVKYSTYTDIVQFMGEFSVSPERVIKMAARESRTFLIEMISKAAWGNHPQTLIHHLKHLTNTMKPQSGKDLIIYTIHYIYLNSNMLVAEEEKNIFKLAKFYANHNAVNRFKQICEDYYILDARFKTLILECFEIAVQKNYPRIANIVDDYIRFLFYRGNITEEEIREAYSLKDAEVYVDLKWLQQGEMV.

The protein belongs to the asfivirus MGF 505 family.

Its function is as follows. Plays a role in virus cell tropism, and may be required for efficient virus replication in macrophages. The sequence is that of Protein MGF 505-10R from Ornithodoros (relapsing fever ticks).